The primary structure comprises 459 residues: tRNA modification GTPase MnmE (459 aa).

(6S)-5-formyl-5,6,7,8-tetrahydrofolate-binding residues include R22, E87, and R126. Residues G221 to L381 enclose the TrmE-type G domain. N231 contributes to the K(+) binding site. GTP-binding positions include N231 to S236, T250 to T256, and D275 to G278. S235 contacts Mg(2+). Residues T250, I252, and T255 each contribute to the K(+) site. T256 contributes to the Mg(2+) binding site. (6S)-5-formyl-5,6,7,8-tetrahydrofolate is bound at residue K459.

The protein belongs to the TRAFAC class TrmE-Era-EngA-EngB-Septin-like GTPase superfamily. TrmE GTPase family. In terms of assembly, homodimer. Heterotetramer of two MnmE and two MnmG subunits. K(+) is required as a cofactor.

It localises to the cytoplasm. Functionally, exhibits a very high intrinsic GTPase hydrolysis rate. Involved in the addition of a carboxymethylaminomethyl (cmnm) group at the wobble position (U34) of certain tRNAs, forming tRNA-cmnm(5)s(2)U34. The sequence is that of tRNA modification GTPase MnmE from Syntrophomonas wolfei subsp. wolfei (strain DSM 2245B / Goettingen).